A 485-amino-acid polypeptide reads, in one-letter code: Probable aspartic-type endopeptidase opsB (485 aa).

Residues 1 to 20 (MRHIFSLLSIVCLMVKHGAC) form the signal peptide. Residues 69–397 (YFCNVTLGTP…DIANNEISIA (329 aa)) form the Peptidase A1 domain. N-linked (GlcNAc...) asparagine glycosylation occurs at N72. Residue D87 is part of the active site. Residues N99, N107, N111, and N132 are each glycosylated (N-linked (GlcNAc...) asparagine). The active site involves D285. N328, N337, and N402 each carry an N-linked (GlcNAc...) asparagine glycan. S461 is lipidated: GPI-anchor amidated serine. Positions 462-485 (AGVARADKQYLAIALIAVWFVLGL) are cleaved as a propeptide — removed in mature form.

The protein belongs to the peptidase A1 family.

Its subcellular location is the cell membrane. Functionally, probable GPI-anchored aspartic-type endopeptidase which contributes to virulence. The protein is Probable aspartic-type endopeptidase opsB (opsB) of Aspergillus fumigatus (strain ATCC MYA-4609 / CBS 101355 / FGSC A1100 / Af293) (Neosartorya fumigata).